Consider the following 167-residue polypeptide: HVA22-like protein b (167 aa).

3 helical membrane-spanning segments follow: residues 18-38 (VIAG…RAIE), 47-67 (QWLT…TFFR), and 68-88 (LLEW…WLVL).

The protein belongs to the DP1 family. In terms of tissue distribution, predominantly expressed in flower buds.

The protein localises to the membrane. The sequence is that of HVA22-like protein b (HVA22B) from Arabidopsis thaliana (Mouse-ear cress).